The primary structure comprises 353 residues: tRNA-specific 2-thiouridylase MnmA 2 (353 aa).

ATP contacts are provided by residues 9–16 and methionine 35; that span reads AMSGGVDS. Catalysis depends on cysteine 98, which acts as the Nucleophile. Cysteines 98 and 194 form a disulfide. Glycine 122 contacts ATP. Residues 144–146 are interaction with tRNA; it reads KDQ. The active-site Cysteine persulfide intermediate is cysteine 194. Residues 300-301 form an interaction with tRNA region; that stretch reads RY.

The protein belongs to the MnmA/TRMU family.

Its subcellular location is the cytoplasm. The enzyme catalyses S-sulfanyl-L-cysteinyl-[protein] + uridine(34) in tRNA + AH2 + ATP = 2-thiouridine(34) in tRNA + L-cysteinyl-[protein] + A + AMP + diphosphate + H(+). Functionally, catalyzes the 2-thiolation of uridine at the wobble position (U34) of tRNA, leading to the formation of s(2)U34. The polypeptide is tRNA-specific 2-thiouridylase MnmA 2 (Clostridium botulinum (strain Loch Maree / Type A3)).